The following is a 270-amino-acid chain: ATP synthase subunit a (270 aa).

Transmembrane regions (helical) follow at residues 40–60 (IDSL…FYAV), 98–118 (IAPL…MDLV), 143–163 (DVNI…YYSI), 208–228 (LFGN…MLPW), and 239–259 (AIFH…LTIV).

It belongs to the ATPase A chain family. In terms of assembly, F-type ATPases have 2 components, CF(1) - the catalytic core - and CF(0) - the membrane proton channel. CF(1) has five subunits: alpha(3), beta(3), gamma(1), delta(1), epsilon(1). CF(0) has three main subunits: a(1), b(2) and c(9-12). The alpha and beta chains form an alternating ring which encloses part of the gamma chain. CF(1) is attached to CF(0) by a central stalk formed by the gamma and epsilon chains, while a peripheral stalk is formed by the delta and b chains.

The protein resides in the cell inner membrane. Key component of the proton channel; it plays a direct role in the translocation of protons across the membrane. The sequence is that of ATP synthase subunit a from Vibrio vulnificus (strain CMCP6).